Here is a 502-residue protein sequence, read N- to C-terminus: UPF0371 protein CLJ_B0384 (502 aa).

It belongs to the UPF0371 family.

This chain is UPF0371 protein CLJ_B0384, found in Clostridium botulinum (strain 657 / Type Ba4).